The following is a 172-amino-acid chain: Large ribosomal subunit protein uL10 (172 aa).

Belongs to the universal ribosomal protein uL10 family. In terms of assembly, part of the ribosomal stalk of the 50S ribosomal subunit. The N-terminus interacts with L11 and the large rRNA to form the base of the stalk. The C-terminus forms an elongated spine to which L12 dimers bind in a sequential fashion forming a multimeric L10(L12)X complex.

Functionally, forms part of the ribosomal stalk, playing a central role in the interaction of the ribosome with GTP-bound translation factors. This is Large ribosomal subunit protein uL10 from Macrococcus caseolyticus (strain JCSC5402) (Macrococcoides caseolyticum).